The sequence spans 892 residues: Alpha-actinin-1 (892 aa).

Met-1 carries the N-acetylmethionine modification. The interval 1 to 247 (MDHYDSQQTN…IMTYVSSFYH (247 aa)) is actin-binding. The residue at position 6 (Ser-6) is a Phosphoserine. Tyr-12 is modified (phosphotyrosine; by FAK1). Calponin-homology (CH) domains are found at residues 31–135 (KQQR…LRFA) and 144–250 (TSAK…HAFS). N6-acetyllysine occurs at positions 95 and 195. 4 Spectrin repeats span residues 274–384 (QLME…WLLN), 394–499 (HLAE…ALER), 509–620 (QLYL…ALTE), and 630–733 (RLRK…EVEN). The interaction with DDN stretch occupies residues 274-733 (QLMEDYEKLA…IARTINEVEN (460 aa)). Ser-471 bears the Phosphoserine mark. Lys-676 carries the N6-acetyllysine modification. At Ser-677 the chain carries Phosphoserine. EF-hand domains are found at residues 746–781 (EQMNEFRASFNHFDRDHSGTLGPEEFKACLISLGYD) and 787–822 (QGEAEFARIMSIVDPNRLGVVTFQAFIDFMSRETAD). Ca(2+) contacts are provided by Asp-759, Asp-761, Ser-763, Thr-765, and Glu-770. Ser-890 bears the Phosphoserine mark.

It belongs to the alpha-actinin family. Homodimer; antiparallel. Interacts with MYOZ2, TTID and LPP. Interacts with DDN. Interacts with PSD. Interacts with MICALL2. Interacts with DNM2 and CTTN. Interacts with PDLIM1. Interacts with PDLIM2. Interacts with PDLIM4 (via PDZ domain). Interacts with IGSF8.

Its subcellular location is the cytoplasm. It localises to the cytoskeleton. The protein localises to the myofibril. It is found in the sarcomere. The protein resides in the z line. Its subcellular location is the cell membrane. It localises to the cell junction. The protein localises to the cell projection. It is found in the ruffle. In terms of biological role, F-actin cross-linking protein which is thought to anchor actin to a variety of intracellular structures. Association with IGSF8 regulates the immune synapse formation and is required for efficient T-cell activation. This Homo sapiens (Human) protein is Alpha-actinin-1 (ACTN1).